A 341-amino-acid polypeptide reads, in one-letter code: 4-hydroxy-2-oxovalerate aldolase 3 (341 aa).

Residues 5-257 form the Pyruvate carboxyltransferase domain; that stretch reads ITLHDMTLRD…ETGVDVYRIA (253 aa). 13 to 14 serves as a coordination point for substrate; that stretch reads RD. Asp-14 is a binding site for Mn(2+). His-17 acts as the Proton acceptor in catalysis. Substrate-binding residues include Ser-167 and His-196. His-196 and His-198 together coordinate Mn(2+). Tyr-287 is a binding site for substrate.

This sequence belongs to the 4-hydroxy-2-oxovalerate aldolase family.

It catalyses the reaction (S)-4-hydroxy-2-oxopentanoate = acetaldehyde + pyruvate. The chain is 4-hydroxy-2-oxovalerate aldolase 3 (bpHI) from Cupriavidus necator (strain ATCC 17699 / DSM 428 / KCTC 22496 / NCIMB 10442 / H16 / Stanier 337) (Ralstonia eutropha).